Reading from the N-terminus, the 242-residue chain is Small ribosomal subunit protein uS2 (242 aa).

It belongs to the universal ribosomal protein uS2 family.

This is Small ribosomal subunit protein uS2 from Shewanella pealeana (strain ATCC 700345 / ANG-SQ1).